Reading from the N-terminus, the 165-residue chain is Endoribonuclease YbeY (165 aa).

His-130, His-134, and His-140 together coordinate Zn(2+).

It belongs to the endoribonuclease YbeY family. Zn(2+) is required as a cofactor.

The protein localises to the cytoplasm. In terms of biological role, single strand-specific metallo-endoribonuclease involved in late-stage 70S ribosome quality control and in maturation of the 3' terminus of the 16S rRNA. The polypeptide is Endoribonuclease YbeY (Streptococcus sanguinis (strain SK36)).